Consider the following 207-residue polypeptide: Ribonuclease HII (207 aa).

An RNase H type-2 domain is found at 12–201; that stretch reads DLVAGVDEVG…VRAAWEAREG (190 aa). Residues aspartate 18, glutamate 19, and aspartate 110 each contribute to the a divalent metal cation site.

The protein belongs to the RNase HII family. Mn(2+) serves as cofactor. The cofactor is Mg(2+).

It localises to the cytoplasm. It catalyses the reaction Endonucleolytic cleavage to 5'-phosphomonoester.. Endonuclease that specifically degrades the RNA of RNA-DNA hybrids. The polypeptide is Ribonuclease HII (Pseudomonas putida (strain W619)).